Consider the following 294-residue polypeptide: 4-hydroxy-tetrahydrodipicolinate synthase (294 aa).

Position 46 (Thr-46) interacts with pyruvate. Tyr-134 serves as the catalytic Proton donor/acceptor. Lys-163 serves as the catalytic Schiff-base intermediate with substrate. Residue Ile-205 participates in pyruvate binding.

The protein belongs to the DapA family. In terms of assembly, homotetramer; dimer of dimers.

The protein localises to the cytoplasm. The catalysed reaction is L-aspartate 4-semialdehyde + pyruvate = (2S,4S)-4-hydroxy-2,3,4,5-tetrahydrodipicolinate + H2O + H(+). Its pathway is amino-acid biosynthesis; L-lysine biosynthesis via DAP pathway; (S)-tetrahydrodipicolinate from L-aspartate: step 3/4. Functionally, catalyzes the condensation of (S)-aspartate-beta-semialdehyde [(S)-ASA] and pyruvate to 4-hydroxy-tetrahydrodipicolinate (HTPA). The protein is 4-hydroxy-tetrahydrodipicolinate synthase of Clostridium tetani (strain Massachusetts / E88).